Consider the following 218-residue polypeptide: Glutathione S-transferase Mu 6 (218 aa).

The GST N-terminal domain occupies 1–88 (MPVTLGYWDI…YLGRKHNLCG (88 aa)). Residues 7-8 (YW), 46-50 (WLNDK), 59-60 (NL), and 72-73 (QS) each bind glutathione. One can recognise a GST C-terminal domain in the interval 90-208 (TEEERIRVDI…KTSRFLPSPV (119 aa)). Tyr116 serves as a coordination point for substrate.

Belongs to the GST superfamily. Mu family. Homodimer. Expressed in liver, stomach and small intestine. Not expressed in spleen, kidney, colon, heart, muscle, brain or lung.

The protein resides in the cytoplasm. It catalyses the reaction RX + glutathione = an S-substituted glutathione + a halide anion + H(+). Its function is as follows. Conjugation of reduced glutathione to a wide number of exogenous and endogenous hydrophobic electrophiles. In Mus musculus (Mouse), this protein is Glutathione S-transferase Mu 6 (Gstm6).